We begin with the raw amino-acid sequence, 303 residues long: Coenzyme PQQ synthesis protein B (303 aa).

Belongs to the PqqB family.

It functions in the pathway cofactor biosynthesis; pyrroloquinoline quinone biosynthesis. May be involved in the transport of PQQ or its precursor to the periplasm. In Pseudomonas putida (strain ATCC 700007 / DSM 6899 / JCM 31910 / BCRC 17059 / LMG 24140 / F1), this protein is Coenzyme PQQ synthesis protein B.